We begin with the raw amino-acid sequence, 880 residues long: Arginine metabolism regulation protein II (880 aa).

Residues 21-48 (CWTCRGRKVKCDLRHPHCQRCEKSNLPC) constitute a DNA-binding region (zn(2)-C6 fungal-type).

Interacts with ARG80 and MCM1.

It localises to the cytoplasm. Its subcellular location is the nucleus. Functionally, with ARG80, ARG82 and MCM1, coordinates the expression of arginine anabolic and catabolic genes in response to arginine. The polypeptide is Arginine metabolism regulation protein II (ARG81) (Saccharomyces cerevisiae (strain ATCC 204508 / S288c) (Baker's yeast)).